Consider the following 117-residue polypeptide: Nitrogen regulatory protein GlnK1 (117 aa).

ADP contacts are provided by residues Thr32, 40-42 (GAQ), and 92-95 (GSGK). ATP-binding positions include Thr32, 40–42 (GAQ), and 92–95 (GSGK).

It belongs to the P(II) protein family. As to quaternary structure, homotrimer. Interacts and forms stable complexes with the glutamine synthetase GlnA1.

Its subcellular location is the cytoplasm. Its activity is regulated as follows. Inhibitory effects on GlnA1 are abolished in the presence of the effector 2-oxoglutarate. Involved in the regulation of nitrogen metabolism. Regulates the activity of its targets by protein-protein interaction in response to the nitrogen status of the cell. Allows finetuning control of the glutamine synthetase GlnA1 under changing nitrogen availabilities via direct protein interaction. The sequence is that of Nitrogen regulatory protein GlnK1 from Methanosarcina mazei (strain ATCC BAA-159 / DSM 3647 / Goe1 / Go1 / JCM 11833 / OCM 88) (Methanosarcina frisia).